A 4473-amino-acid polypeptide reads, in one-letter code: Plectin (4473 aa).

2 consecutive Calponin-homology (CH) domains span residues 1–74 (DGHN…LHFQ) and 87–192 (MTAK…DAMP). The interval 1-192 (DGHNLISLLE…YVSSLYDAMP (192 aa)) is actin-binding. Residues 1-1259 (DGHNLISLLE…SELTTLTSQY (1259 aa)) are globular 1. One copy of the Spectrin 1 repeat lies at 449–508 (RYLQDLLAWVEENQRRIDSAEWGVDLPSVEAQLGSHRGMHQSIEEFRAKIERARNDESQL). Serine 509 bears the Phosphoserine mark. Spectrin repeat units lie at residues 529–613 (KLLN…REDH) and 626–719 (LQTQ…AIVQ). Threonine 604 carries the phosphothreonine modification. The 58-residue stretch at 730–787 (RGHVPLMAVCDYKQVEVTVHKGDQCQLVGPAQPSHWKVLRGPSSEAAVPSVCFLVPPP) folds into the SH3 domain. Serine 836 carries the phosphoserine modification. One copy of the Spectrin 4 repeat lies at 1104 to 1204 (RERVNQLLER…QKFAKQYINA (101 aa)). At serine 1224 the chain carries Phosphoserine. Residues 1258–2548 (QYIKFISETL…EEIAATQAAA (1291 aa)) are a coiled coil. The segment at 1260–2544 (IKFISETLRR…LAHSEEIAAT (1285 aa)) is central fibrous rod domain. Disordered stretches follow at residues 1274-1293 (ERLAEQQRAEERERLAEGEA) and 1407-1434 (RAEEAEAQKRQAQEEAERLRRQVQDESQ). Serine 1510 is subject to Phosphoserine. Lysine 1514 bears the N6-acetyllysine mark. Disordered stretches follow at residues 1529-1550 (VTQLREKAERRAQQQAEAERAR), 1582-1616 (SLAQADAEKQKEEAEREARRRGKAEEQAVRQRELA), 1881-1929 (AEDT…AARQ), 1950-1971 (LRERAEQESARQLQLAQEAAQK), and 2003-2098 (ERLR…KHKK). 3 stretches are compositionally biased toward basic and acidic residues: residues 1587–1616 (DAEKQKEEAEREARRRGKAEEQAVRQRELA), 1881–1897 (AEDTMRSKEQAEQEAAR), and 1905–1917 (EEQRRREAEERVQ). Residues 1959–1968 (ARQLQLAQEA) are compositionally biased toward low complexity. The segment covering 2003-2047 (ERLRGEAEAARRAAEEAEEAREQAEREAAQSRKQVEEAERLKQSA) has biased composition (basic and acidic residues). Over residues 2048–2061 (EEQAQARAQAQAAA) the composition is skewed to low complexity. Over residues 2062–2077 (EKLRKEAEQEAARRAQ) the composition is skewed to basic and acidic residues. Serine 2420 bears the Phosphoserine mark. At lysine 2425 the chain carries N6-acetyllysine. Residues 2457 to 2476 (REEQQRQQRQMEQEKQELVA) form a disordered region. A globular 2 region spans residues 2545 to 4473 (QAAAAKALPN…SLGGPESAVA (1929 aa)). Phosphoserine is present on residues serine 2563 and serine 2591. Plectin repeat units follow at residues 2615–2652 (RQYLQGRSSIAGLLLKPTDEKLSVYTALQRQLLSPGTA), 2653–2690 (LILLEAQAASGFLLDPVRNRRLTVNEPVKEGVVGPELH), 2691–2728 (HKLLSAERAVTGYKDPYTGEQISLFQAMKKDLLVRDHA), 2729–2766 (IRLLEAQIATGGIIDTVHSHRVPVDVAYQRGYFDEEMS), and 2770–2804 (ADPGDDTKGFFDPNTHENLTYLQLLERCVEDPETG). Position 2675 is a phosphothreonine (threonine 2675). Tyrosine 2822 is modified (phosphotyrosine). An N6-acetyllysine mark is found at lysine 2842 and lysine 2880. Plectin repeat units follow at residues 2905–2942 (ALVPAAELLESGVISHELYQQLQRGERSVREVAEADSV), 2943–2980 (RRALRGASVIAGVWLEEAGQKLSIYEALKKDLLQPDVA), 2981–3018 (VALLEAQAGTGHIIDPATSARLTVDEAVRAGLVGPELH), 3019–3056 (EKLLSAEKAVTGYRDPYSGQSVSLFQALKKGLIPREQG), and 3057–3094 (LRLLDAQLSTGGMVDPSKSHRVPLDVAYARGYLDKETN). Tyrosine 3151 carries the post-translational modification Phosphotyrosine. The residue at position 3209 (lysine 3209) is an N6-acetyllysine. Plectin repeat units follow at residues 3274–3311 (RTLLQGSGCLAGVYLEDSKEKVTIYEAMRRGLLRPSTA), 3312–3349 (TLLLEAQAATGFLVDPVRNQRLYVHEAVKAGVVGPELH), 3350–3387 (EKLLSAEKAVTGYKDPYSGTTISLFQAMKKGLVLREHA), 3388–3425 (IRLLEAQIATGGIIDPVHSHRLPVDVAYQRGYFDEEMS), and 3429–3463 (ADPSDDTKGFFDPNTHENLTYLQLLERCVEDPETG). A Phosphothreonine modification is found at threonine 3574. Position 3579 is a phosphotyrosine (tyrosine 3579). Plectin repeat units follow at residues 3609–3646 (WRYLYGTGSVAGVYLPGSRQTLTIYQALKKGLLSAEVA), 3647–3684 (RLLLEAQAATGFLLDPVKGERLTVDEAVRKGLVGPELH), 3685–3722 (DRLLSAERAVTGYRDPYTEQTISLFQAMKKELIPAEEA), 3723–3760 (LRLLDAQLATGGIVDPRLGFHLPLEVAYQRGYLNKDTH), 3764–3797 (SEPSEVRSYVDPSTDERLSYTQLLKRCRRDDGSG), and 3800–3834 (LLPLSDARRLTFRGLRKQITVEELVRSQVMDEATA). At threonine 3819 the chain carries Phosphothreonine. The residue at position 3843 (serine 3843) is a Phosphoserine. 6 Plectin repeats span residues 3852–3889 (QKFLEGTSCIAGVFVDATKERLSVYQAMKKGIIRPGTA), 3890–3927 (FELLEAQAATGYVIDPIKGLKLTVEEAVRMGIVGPEFK), 3928–3965 (DRLLSAERAVTGYKDPYSGKLISLFQAMKKGLILKDHG), 3966–4003 (IRLLEAQIATGGIIDPEESHRLPVEVAYKRGLFDEEMN), 4007–4041 (TDPSDDTKGFFDPNTEENLTYLQLMERCITDPQTG), and 4043–4094 (RLLP…HQTY). Residues 4039 to 4089 (QTGLRLLPLKEKKRERKTSSKSSVRKRRVVIVDPETSKEMSVYEAYRKGLI) are binding to intermediate filaments. 8 positions are modified to phosphoserine: serine 4171, serine 4173, serine 4174, serine 4175, serine 4178, serine 4179, serine 4180, and serine 4181. Tyrosine 4182 bears the Phosphotyrosine mark. Residues serine 4185, serine 4189, and serine 4195 each carry the phosphoserine modification. Plectin repeat units follow at residues 4197–4234 (SDPTEETGPVAGILDTETLEKVSITEAMHRNLVDNITG), 4235–4272 (QRLLEAQACTGGIIDPSTGERFPVTEAVNKGLVDKIMV), 4273–4310 (DRINLAQKAFCGFEDPRTKTKMSAAQALKKGWLYYEAG), 4311–4348 (QRFLEVQYLTGGLIEPDTPGRVPLDEALQRGTVDARTA), and 4349–4386 (QKLRDVSAYSKYLTCPKTKLKISYKDALDRSMVEEGTG). At threonine 4200 the chain carries Phosphothreonine. Threonine 4328 carries the phosphothreonine; by CDK1 modification. Phosphoserine occurs at positions 4396 and 4402. Positions 4400–4460 (YYSPYSVSGS…SGYGRRYASG (61 aa)) are enriched in low complexity. The interval 4400 to 4473 (YYSPYSVSGS…SLGGPESAVA (74 aa)) is disordered. Tyrosine 4404 carries the phosphotyrosine modification. Serine 4405, serine 4407, and serine 4411 each carry phosphoserine. Phosphothreonine is present on threonine 4412. A 4 X 4 AA tandem repeats of G-S-R-X region spans residues 4414-4429 (GSRTGSRTGSRAGSRR). The residue at position 4415 (serine 4415) is a Phosphoserine. Omega-N-methylarginine occurs at positions 4416 and 4429. A phosphoserine mark is found at serine 4431 and serine 4464.

Belongs to the plakin or cytolinker family. Homodimer or homotetramer. Interacts (via actin-binding domain) with SYNE3. Interacts (via calponin-homology (CH) 1 domain) with VIM (via rod region). Interacts (via N-terminus) with DST isoform 2 (via N-terminus). Interacts with FER. Interacts with TOR1A. Interacts with ANK3. Identified in complexes that contain VIM, EZR, AHNAK, BFSP1, BFSP2, ANK2, PLEC, PRX and spectrin. Phosphorylated by CDK1; regulates dissociation from intermediate filaments during mitosis.

The protein resides in the cytoplasm. It localises to the cytoskeleton. The protein localises to the cell junction. It is found in the hemidesmosome. Its subcellular location is the cell projection. The protein resides in the podosome. Interlinks intermediate filaments with microtubules and microfilaments and anchors intermediate filaments to desmosomes or hemidesmosomes. May be involved not only in the cross-linking and stabilization of cytoskeletal intermediate filaments network, but also in the regulation of their dynamics. The chain is Plectin (PLEC) from Cricetulus griseus (Chinese hamster).